Reading from the N-terminus, the 176-residue chain is Large ribosomal subunit protein uL6 (176 aa).

This sequence belongs to the universal ribosomal protein uL6 family. In terms of assembly, part of the 50S ribosomal subunit.

Functionally, this protein binds to the 23S rRNA, and is important in its secondary structure. It is located near the subunit interface in the base of the L7/L12 stalk, and near the tRNA binding site of the peptidyltransferase center. This chain is Large ribosomal subunit protein uL6, found in Burkholderia ambifaria (strain ATCC BAA-244 / DSM 16087 / CCUG 44356 / LMG 19182 / AMMD) (Burkholderia cepacia (strain AMMD)).